Consider the following 109-residue polypeptide: UPF0060 membrane protein PSPA7_1846 (109 aa).

Helical transmembrane passes span 5–25, 27–47, 59–79, and 84–104; these read LWFV…YLWL, LGKS…FALL, AYAA…AFVE, and LWSD…VLFG.

The protein belongs to the UPF0060 family.

It is found in the cell inner membrane. In Pseudomonas paraeruginosa (strain DSM 24068 / PA7) (Pseudomonas aeruginosa (strain PA7)), this protein is UPF0060 membrane protein PSPA7_1846.